We begin with the raw amino-acid sequence, 481 residues long: MVQHRFLLVTFPAQGHINPSLQFAKRLINTTGAHVTYVTSLSAHRRIGNGSIPDGLTYAPFSDGYDDGFKPGDNVDDYMSELRRRGVQAITDLVVASANEGHPYTCLVYSLLLPWSAGMAHELHLPSVLLWIQPATVFDIYYYYFNGYKDLIRDNTSSGTNNVLPCSIELPGLPLSFTSRDLPSFMVDTNPYNFALPLFQEQMELLERETNPTILVNTFDALEPEALKAIDKYNLIGVGPLIPSAFLDGKDPSDKSFGGDLFQKSKDSSYLEWLNSKPEGSVIYVSFGSISVLGKAQMEEIAKGLLDCGLPFLWVIRDKVGKKGDDNEAKKEEEMLRCREELEELGMIVPWCSQVEVLSSPSLGCFVTHCGWNSSLESLVSGVPVVAFPQWTDQGTNAKLIEDYWKTGVRVTPNEEGIVTGEELKRCLDLVLGSGEIGEDVRRNAKKWKDLAREAVSEGDSSDKNLRAFLDQIKVLKDARH.

Residue His-16 is the Proton acceptor of the active site. His-16 is a binding site for an anthocyanidin. Positions 354, 369, 372, 373, 374, 377, 393, and 394 each coordinate UDP-alpha-D-glucose.

Belongs to the UDP-glycosyltransferase family. Highly expressed in young leaves, at intermediate level in mature leaves and at low levels in flowers and fruits.

The catalysed reaction is phloretin + UDP-alpha-D-glucose = trilobatin + UDP + H(+). It carries out the reaction (2S)-naringenin + UDP-alpha-D-glucose = (2S)-naringenin 7-O-beta-D-glucoside + UDP + H(+). Glycosyltransferase that possesses phloretin 4'-O-glycosyltransferase activity. Converts phloretin to trilobatin (phloretin 4'-O-glucoside), a potential antioxidant. Can convert with low efficiency phlorizin and trilobatin to their corresponding di-O-glucosides. Can convert with low efficiency naringenin to naringenin-7-O-glucoside. Can convert with low efficiency quercetin to quercetin-7-O-glucoside. In Malus domestica (Apple), this protein is Phloretin 4'-O-glucosyltransferase.